The following is a 63-amino-acid chain: Large ribosomal subunit protein bL32c (63 aa).

Residues 39-63 (SFSSGNEHPKPKGFSGQQTNNKIFE) are disordered. A compositionally biased stretch (polar residues) spans 53-63 (SGQQTNNKIFE).

Belongs to the bacterial ribosomal protein bL32 family.

The protein localises to the plastid. Its subcellular location is the chloroplast. This chain is Large ribosomal subunit protein bL32c, found in Triticum aestivum (Wheat).